The sequence spans 229 residues: Synaptogyrin-3 (229 aa).

Residue methionine 1 is modified to N-acetylmethionine. The MARVEL domain maps to 20–172 (FARRPQTLLR…LTVKALQRFR (153 aa)). The next 4 membrane-spanning stretches (helical) occupy residues 30–50 (VASW…GYVN), 70–90 (FGVA…LLDV), 105–125 (VLLD…GFCF), and 148–168 (AVIT…VKAL).

The protein belongs to the synaptogyrin family. Interacts (via N-terminus) with SLC6A3 (via N-terminus). May interact with VMAT2.

It localises to the cytoplasmic vesicle. Its subcellular location is the secretory vesicle. The protein localises to the synaptic vesicle membrane. The protein resides in the synapse. Its function is as follows. May play a role in regulated exocytosis. May indirectly regulate the activity of the plasma membrane dopamine transporter SLC6A3 and thereby regulate dopamine transport back from the synaptic cleft into the presynaptic terminal. The polypeptide is Synaptogyrin-3 (Bos taurus (Bovine)).